The sequence spans 420 residues: Anaerobic glycerol-3-phosphate dehydrogenase subunit B (420 aa).

This sequence belongs to the anaerobic G-3-P dehydrogenase subunit B family. Composed of a catalytic GlpA/B dimer and of membrane bound GlpC. The cofactor is FMN.

It catalyses the reaction a quinone + sn-glycerol 3-phosphate = dihydroxyacetone phosphate + a quinol. It functions in the pathway polyol metabolism; glycerol degradation via glycerol kinase pathway; glycerone phosphate from sn-glycerol 3-phosphate (anaerobic route): step 1/1. Its function is as follows. Conversion of glycerol 3-phosphate to dihydroxyacetone. Uses fumarate or nitrate as electron acceptor. This chain is Anaerobic glycerol-3-phosphate dehydrogenase subunit B, found in Pectobacterium carotovorum subsp. carotovorum (strain PC1).